We begin with the raw amino-acid sequence, 88 residues long: Small ribosomal subunit protein uS15 (88 aa).

The protein belongs to the universal ribosomal protein uS15 family. In terms of assembly, part of the 30S ribosomal subunit. Forms a bridge to the 50S subunit in the 70S ribosome, contacting the 23S rRNA.

Functionally, one of the primary rRNA binding proteins, it binds directly to 16S rRNA where it helps nucleate assembly of the platform of the 30S subunit by binding and bridging several RNA helices of the 16S rRNA. Its function is as follows. Forms an intersubunit bridge (bridge B4) with the 23S rRNA of the 50S subunit in the ribosome. The protein is Small ribosomal subunit protein uS15 of Polaromonas sp. (strain JS666 / ATCC BAA-500).